Consider the following 506-residue polypeptide: MQLKVQPIDVKVGKYKVILNTIDAKELGVHEGDRVRIKNHVTLTAIVDFTEDMISPGMIGLYHEVKEALSKEWTETVEVFPAEKPKSTYIIRKTMDGQKLTKEEIDILVKDIVEENLAEIEIAAFLTATYINDMTDDETEWLTRAMIDSGDKLEFDTHPIMDKHSIGGVPGNKISLLIVPIVAANGLLIPKTSSRAITGAGGTADLMEILAPVEFDAAEIKRMTEEVGGVLVWGGATNIAPADDKLIKVEYPLSIDPHCQMLASIMAKKGAIGADHVVMDIPTGPGTKIKNVQEGRKLARDLINLGDRLGMDVDCALTYGASPVGRTIGPALEVIEALKVLESFEGPNSLIEKSASLAGMLLEMGNVAGKDKGYDLAIETLKNGKALTKFKEIIKIQGGNPDVTHKDISVGEFTEDIIAPNNGYILEMDNKRLVQIARLAGAPNDKGAGILLHRKQGEPLKEGDPVMTIYAEKKSKLENAVKSAKERPPFIVEGMMLERIQSFKEI.

Residues G168, 194-199 (SRAITG), and T203 each bind AMP. D256 acts as the Proton donor in catalysis. AMP contacts are provided by S264 and K288.

Belongs to the thymidine/pyrimidine-nucleoside phosphorylase family. Type 2 subfamily.

It catalyses the reaction AMP + phosphate = alpha-D-ribose 1,5-bisphosphate + adenine. The catalysed reaction is CMP + phosphate = cytosine + alpha-D-ribose 1,5-bisphosphate. The enzyme catalyses UMP + phosphate = alpha-D-ribose 1,5-bisphosphate + uracil. In terms of biological role, catalyzes the conversion of AMP and phosphate to adenine and ribose 1,5-bisphosphate (R15P). Exhibits phosphorylase activity toward CMP and UMP in addition to AMP. Functions in an archaeal AMP degradation pathway, together with R15P isomerase and RubisCO. The protein is AMP phosphorylase of Methanococcoides burtonii (strain DSM 6242 / NBRC 107633 / OCM 468 / ACE-M).